The following is a 247-amino-acid chain: Adenosylcobinamide-GDP ribazoletransferase (247 aa).

The next 5 helical transmembrane spans lie at 34–54 (IITF…VFMV), 57–77 (AWCG…LMTG), 113–133 (GGLA…ELAL), 138–158 (ILAS…LLMY), and 194–214 (VLLL…AIFI).

Belongs to the CobS family. Mg(2+) serves as cofactor.

The protein resides in the cell inner membrane. The catalysed reaction is alpha-ribazole + adenosylcob(III)inamide-GDP = adenosylcob(III)alamin + GMP + H(+). It carries out the reaction alpha-ribazole 5'-phosphate + adenosylcob(III)inamide-GDP = adenosylcob(III)alamin 5'-phosphate + GMP + H(+). The protein operates within cofactor biosynthesis; adenosylcobalamin biosynthesis; adenosylcobalamin from cob(II)yrinate a,c-diamide: step 7/7. Functionally, joins adenosylcobinamide-GDP and alpha-ribazole to generate adenosylcobalamin (Ado-cobalamin). Also synthesizes adenosylcobalamin 5'-phosphate from adenosylcobinamide-GDP and alpha-ribazole 5'-phosphate. The protein is Adenosylcobinamide-GDP ribazoletransferase of Shigella flexneri serotype 5b (strain 8401).